We begin with the raw amino-acid sequence, 63 residues long: Cytochrome c oxidase subunit 7C, mitochondrial (63 aa).

A mitochondrion-targeting transit peptide spans 1–16 (MLGQSIRRFTTSVVRR). The Mitochondrial matrix portion of the chain corresponds to 17–33 (SHYEEGPGKNIPFSVEN). At Lys25 the chain carries N6-acetyllysine; alternate. Lys25 bears the N6-succinyllysine; alternate mark. The helical transmembrane segment at 34–60 (KWRLLAMMTLFFGSGFAAPFFIVRHQL) threads the bilayer. Residues 61 to 63 (LKK) lie on the Mitochondrial intermembrane side of the membrane.

This sequence belongs to the cytochrome c oxidase VIIc family. As to quaternary structure, component of the cytochrome c oxidase (complex IV, CIV), a multisubunit enzyme composed of 14 subunits. The complex is composed of a catalytic core of 3 subunits MT-CO1, MT-CO2 and MT-CO3, encoded in the mitochondrial DNA, and 11 supernumerary subunits COX4I1 (or COX4I2), COX5A, COX5B, COX6A2 (or COX6A1), COX6B1 (or COX6B2), COX6C, COX7A1 (or COX7A2), COX7B, COX7C, COX8B and NDUFA4, which are encoded in the nuclear genome. The complex exists as a monomer or a dimer and forms supercomplexes (SCs) in the inner mitochondrial membrane with NADH-ubiquinone oxidoreductase (complex I, CI) and ubiquinol-cytochrome c oxidoreductase (cytochrome b-c1 complex, complex III, CIII), resulting in different assemblies (supercomplex SCI(1)III(2)IV(1) and megacomplex MCI(2)III(2)IV(2)). Interacts with RAB5IF. As to expression, liver, heart, muscle and brain, contain the same isoform of COX VIIc, but at different concentrations.

It localises to the mitochondrion inner membrane. It functions in the pathway energy metabolism; oxidative phosphorylation. Functionally, component of the cytochrome c oxidase, the last enzyme in the mitochondrial electron transport chain which drives oxidative phosphorylation. The respiratory chain contains 3 multisubunit complexes succinate dehydrogenase (complex II, CII), ubiquinol-cytochrome c oxidoreductase (cytochrome b-c1 complex, complex III, CIII) and cytochrome c oxidase (complex IV, CIV), that cooperate to transfer electrons derived from NADH and succinate to molecular oxygen, creating an electrochemical gradient over the inner membrane that drives transmembrane transport and the ATP synthase. Cytochrome c oxidase is the component of the respiratory chain that catalyzes the reduction of oxygen to water. Electrons originating from reduced cytochrome c in the intermembrane space (IMS) are transferred via the dinuclear copper A center (CU(A)) of subunit 2 and heme A of subunit 1 to the active site in subunit 1, a binuclear center (BNC) formed by heme A3 and copper B (CU(B)). The BNC reduces molecular oxygen to 2 water molecules using 4 electrons from cytochrome c in the IMS and 4 protons from the mitochondrial matrix. The polypeptide is Cytochrome c oxidase subunit 7C, mitochondrial (COX7C) (Bos taurus (Bovine)).